The following is a 466-amino-acid chain: Zinc finger and SCAN domain-containing protein 26 (466 aa).

A Glycyl lysine isopeptide (Lys-Gly) (interchain with G-Cter in SUMO2) cross-link involves residue lysine 21. The 83-residue stretch at 42 to 124 (CKQFRQLRYE…GILEDLQLDR (83 aa)) folds into the SCAN box domain. 2 stretches are compositionally biased toward basic and acidic residues: residues 124–135 (RGKAGEQKDSAQ) and 163–173 (KPEERGKETRS). The tract at residues 124-182 (RGKAGEQKDSAQRSRPTVLVGEPAPRREAREQPGCALPQKPEERGKETRSENGNLIAGT) is disordered. The C2H2-type 1; degenerate zinc-finger motif lies at 220–242 (SQCLETKERLVQNSGLIEHDRAH). 7 C2H2-type zinc fingers span residues 270-292 (HPCQ…QKIH), 298-320 (YQCK…LRIH), 326-348 (YLCI…QKIH), 354-376 (RECK…QRVH), 382-404 (HHCN…HRIH), 410-432 (FKCN…VRIH), and 438-460 (YKCS…QRHH).

It is found in the nucleus. Its function is as follows. May be involved in transcriptional regulation. This is Zinc finger and SCAN domain-containing protein 26 (Zscan26) from Mus musculus (Mouse).